Reading from the N-terminus, the 885-residue chain is Translation initiation factor IF-2 (885 aa).

Residues 123–232 show a composition bias toward basic and acidic residues; sequence ETEAKAKAEA…EAERYSDHHI (110 aa). The disordered stretch occupies residues 123–289; the sequence is ETEAKAKAEA…RNRSTAPESM (167 aa). Residues 253–266 are compositionally biased toward basic residues; that stretch reads GRRARNKNTAKTKR. Over residues 267–276 the composition is skewed to basic and acidic residues; sequence GGKDARDGRE. The tr-type G domain occupies 385-554; it reads PRAPVVTIMG…LLQAEVLELK (170 aa). Residues 394–401 are G1; sequence GHVDHGKT. Position 394–401 (394–401) interacts with GTP; that stretch reads GHVDHGKT. The interval 419–423 is G2; that stretch reads GITQH. Positions 440 to 443 are G3; sequence DTPG. Residues 440–444 and 494–497 contribute to the GTP site; these read DTPGH and NKMD. The segment at 494 to 497 is G4; it reads NKMD. The G5 stretch occupies residues 530 to 532; it reads SAK.

Belongs to the TRAFAC class translation factor GTPase superfamily. Classic translation factor GTPase family. IF-2 subfamily.

The protein resides in the cytoplasm. In terms of biological role, one of the essential components for the initiation of protein synthesis. Protects formylmethionyl-tRNA from spontaneous hydrolysis and promotes its binding to the 30S ribosomal subunits. Also involved in the hydrolysis of GTP during the formation of the 70S ribosomal complex. This is Translation initiation factor IF-2 from Shewanella oneidensis (strain ATCC 700550 / JCM 31522 / CIP 106686 / LMG 19005 / NCIMB 14063 / MR-1).